The primary structure comprises 153 residues: Endoribonuclease YbeY (153 aa).

Residues H114, H118, and H124 each contribute to the Zn(2+) site.

The protein belongs to the endoribonuclease YbeY family. The cofactor is Zn(2+).

It localises to the cytoplasm. Functionally, single strand-specific metallo-endoribonuclease involved in late-stage 70S ribosome quality control and in maturation of the 3' terminus of the 16S rRNA. This is Endoribonuclease YbeY from Shewanella baltica (strain OS155 / ATCC BAA-1091).